A 196-amino-acid polypeptide reads, in one-letter code: Small ribosomal subunit protein uS5 (196 aa).

The S5 DRBM domain occupies 17 to 80 (FEEKMLFVNR…AVARKNMITV (64 aa)). A disordered region spans residues 164-196 (GTEVRPSLSSDSPAGRSATTEAGEGVADTGGMQ). A compositionally biased stretch (polar residues) spans 170–183 (SLSSDSPAGRSATT).

This sequence belongs to the universal ribosomal protein uS5 family. In terms of assembly, part of the 30S ribosomal subunit. Contacts proteins S4 and S8.

In terms of biological role, with S4 and S12 plays an important role in translational accuracy. Functionally, located at the back of the 30S subunit body where it stabilizes the conformation of the head with respect to the body. In Deinococcus radiodurans (strain ATCC 13939 / DSM 20539 / JCM 16871 / CCUG 27074 / LMG 4051 / NBRC 15346 / NCIMB 9279 / VKM B-1422 / R1), this protein is Small ribosomal subunit protein uS5.